Reading from the N-terminus, the 218-residue chain is Glutathione S-transferase Mu 4 (218 aa).

Residues 1–88 (MPMTLGYWDI…YIARKHNLCG (88 aa)) enclose the GST N-terminal domain. Glutathione-binding positions include 7 to 8 (YW), 46 to 50 (WLSEK), 59 to 60 (NL), and 72 to 73 (QS). The region spanning 90–208 (TEEEKIRVDI…KTSRFLRTPL (119 aa)) is the GST C-terminal domain. Position 116 (Tyr116) interacts with substrate.

This sequence belongs to the GST superfamily. Mu family. Homodimer. Widely expressed.

The protein localises to the cytoplasm. It carries out the reaction RX + glutathione = an S-substituted glutathione + a halide anion + H(+). It catalyses the reaction 1-chloro-2,4-dinitrobenzene + glutathione = 2,4-dinitrophenyl-S-glutathione + chloride + H(+). The catalysed reaction is (13S,14S)-epoxy-(4Z,7Z,9E,11E,16Z,19Z)-docosahexaenoate + glutathione = (13R)-S-glutathionyl-(14S)-hydroxy-(4Z,7Z,9E,11E,16Z,19Z)-docosahexaenoate. The enzyme catalyses leukotriene C4 = leukotriene A4 + glutathione. Functionally, conjugation of reduced glutathione to a wide number of exogenous and endogenous hydrophobic electrophiles. Catalyzes the conjugation of leukotriene A4 with reduced glutathione (GSH) to form leukotriene C4. Can also catalyze the transfer of a glutathionyl group from glutathione (GSH) to 13(S),14(S)-epoxy-docosahexaenoic acid to form maresin conjugate in tissue regeneration 1 (MCTR1), a bioactive lipid mediator that possess potent anti-inflammatory and proresolving actions. The sequence is that of Glutathione S-transferase Mu 4 from Mus musculus (Mouse).